A 916-amino-acid chain; its full sequence is Calcium homeostasis endoplasmic reticulum protein (916 aa).

The residue at position 1 (Met-1) is an N-acetylmethionine. The SURP motif repeat unit spans residues 15–57 (VIDKLAQFVARNGPEFEKMTMEKQKDNPKFSFLFGGEFYSYYK). Lys-18 carries the N6-acetyllysine modification. In terms of domain architecture, CID spans 149 to 289 (ETQLDMNEFD…QLQSPALGLG (141 aa)). 2 disordered regions span residues 336–549 (QQQQ…RFPP) and 601–635 (HPPW…PHIN). Positions 354-374 (TPPPPAPPPAPAPAPAIPPTT) are enriched in pro residues. Polar residues predominate over residues 480 to 501 (WNNQPDAAWNSQFEGPWNSQHE). Residues 525-541 (PFPPHQQHPQFNQPPHP) are compositionally biased toward pro residues. The residue at position 714 (Tyr-714) is a Phosphotyrosine. Residues 722–878 (RARRRKGQEK…DPIKGGDVRD (157 aa)) are disordered. The segment covering 739–749 (SRSRSKSRGRS) has biased composition (basic residues). Low complexity predominate over residues 750–766 (SSRSNSRSSKSSGSYSR). The segment covering 767-815 (SRSRSCSRSYSRSRSRSRSRSRSSRSRSRSQSRSRSKSYSPGRRRRSRS) has biased composition (basic residues). Residues Ser-813, Ser-815, and Ser-817 each carry the phosphoserine modification. Thr-819 carries the post-translational modification Phosphothreonine. A Phosphoserine modification is found at Ser-828. Residues 841–891 (EENKGHQMLVKMGWSGSGGLGAKEQGIQDPIKGGDVRDKWDQYKGVGVALD) form the G-patch domain. Residue Lys-844 forms a Glycyl lysine isopeptide (Lys-Gly) (interchain with G-Cter in SUMO2) linkage. Phosphoserine is present on residues Ser-855 and Ser-857. Residue Lys-872 forms a Glycyl lysine isopeptide (Lys-Gly) (interchain with G-Cter in SUMO2) linkage. Lys-879 carries the post-translational modification N6-acetyllysine. Ser-904 bears the Phosphoserine mark.

Expressed in brain, placenta, lung, liver, kidney, pancreas, cardiac and skeletal muscle, and in cultured HEL and Dami cells.

It localises to the cytoplasm. The protein localises to the perinuclear region. It is found in the endoplasmic reticulum. Its function is as follows. Involved in calcium homeostasis, growth and proliferation. The chain is Calcium homeostasis endoplasmic reticulum protein from Homo sapiens (Human).